Reading from the N-terminus, the 242-residue chain is tRNA pseudouridine synthase A (242 aa).

The active-site Nucleophile is the aspartate 51. Tyrosine 107 provides a ligand contact to substrate.

This sequence belongs to the tRNA pseudouridine synthase TruA family. Homodimer.

It catalyses the reaction uridine(38/39/40) in tRNA = pseudouridine(38/39/40) in tRNA. Its function is as follows. Formation of pseudouridine at positions 38, 39 and 40 in the anticodon stem and loop of transfer RNAs. The polypeptide is tRNA pseudouridine synthase A (Helicobacter pylori (strain HPAG1)).